Here is a 452-residue protein sequence, read N- to C-terminus: Maltoporin (452 aa).

The first 25 residues, 1 to 25, serve as a signal peptide directing secretion; that stretch reads MMITLRKLPLAVAVAAGVMSAQAMA.

The protein belongs to the porin LamB (TC 1.B.3) family. Homotrimer formed of three 18-stranded antiparallel beta-barrels, containing three independent channels.

It is found in the cell outer membrane. It catalyses the reaction beta-maltose(in) = beta-maltose(out). In terms of biological role, involved in the transport of maltose and maltodextrins. The chain is Maltoporin from Salmonella heidelberg (strain SL476).